A 454-amino-acid chain; its full sequence is Bifunctional protein GlmU (454 aa).

The tract at residues 1 to 233 (MTNRTCLAVI…RESAVGINNR (233 aa)) is pyrophosphorylase. UDP-N-acetyl-alpha-D-glucosamine contacts are provided by residues 11-14 (LAAG), Lys-25, Gln-79, and 84-85 (GT). Asp-109 is a Mg(2+) binding site. The UDP-N-acetyl-alpha-D-glucosamine site is built by Gly-145, Glu-159, Asn-174, and Asn-231. A Mg(2+)-binding site is contributed by Asn-231. Residues 234–254 (AELAEAEAVWQQKRRRELMLS) are linker. An N-acetyltransferase region spans residues 255–454 (GVTLIAPETV…AEEKAKKSGG (200 aa)). UDP-N-acetyl-alpha-D-glucosamine contacts are provided by Arg-320 and Lys-338. The active-site Proton acceptor is the His-350. Tyr-353 and Asn-364 together coordinate UDP-N-acetyl-alpha-D-glucosamine. Acetyl-CoA-binding positions include Ala-367, 373-374 (NY), Ser-410, and Arg-427.

The protein in the N-terminal section; belongs to the N-acetylglucosamine-1-phosphate uridyltransferase family. It in the C-terminal section; belongs to the transferase hexapeptide repeat family. Homotrimer. Requires Mg(2+) as cofactor.

It is found in the cytoplasm. The enzyme catalyses alpha-D-glucosamine 1-phosphate + acetyl-CoA = N-acetyl-alpha-D-glucosamine 1-phosphate + CoA + H(+). It catalyses the reaction N-acetyl-alpha-D-glucosamine 1-phosphate + UTP + H(+) = UDP-N-acetyl-alpha-D-glucosamine + diphosphate. It functions in the pathway nucleotide-sugar biosynthesis; UDP-N-acetyl-alpha-D-glucosamine biosynthesis; N-acetyl-alpha-D-glucosamine 1-phosphate from alpha-D-glucosamine 6-phosphate (route II): step 2/2. It participates in nucleotide-sugar biosynthesis; UDP-N-acetyl-alpha-D-glucosamine biosynthesis; UDP-N-acetyl-alpha-D-glucosamine from N-acetyl-alpha-D-glucosamine 1-phosphate: step 1/1. Its pathway is bacterial outer membrane biogenesis; LPS lipid A biosynthesis. Functionally, catalyzes the last two sequential reactions in the de novo biosynthetic pathway for UDP-N-acetylglucosamine (UDP-GlcNAc). The C-terminal domain catalyzes the transfer of acetyl group from acetyl coenzyme A to glucosamine-1-phosphate (GlcN-1-P) to produce N-acetylglucosamine-1-phosphate (GlcNAc-1-P), which is converted into UDP-GlcNAc by the transfer of uridine 5-monophosphate (from uridine 5-triphosphate), a reaction catalyzed by the N-terminal domain. The polypeptide is Bifunctional protein GlmU (Chelativorans sp. (strain BNC1)).